Here is a 742-residue protein sequence, read N- to C-terminus: Condensin complex subunit 2 (742 aa).

Disordered stretches follow at residues 1–62 (MKRA…FNSS), 151–172 (QQTEEGEDAENDDEDLQKKKER), 452–473 (FNSSNTAESSDNVSRSLSSTER), and 564–604 (IQPH…PSSS). Positions 21–39 (ALEKKRAKENSRKQRELRR) are enriched in basic and acidic residues. The span at 53–62 (LNNSSPFNSS) shows a compositional bias: polar residues. A compositionally biased stretch (acidic residues) spans 154 to 165 (EEGEDAENDDED). 2 stretches are compositionally biased toward polar residues: residues 452 to 470 (FNSSNTAESSDNVSRSLSS) and 592 to 604 (PKQTPLLTPPSSS).

This sequence belongs to the CND2 (condensin subunit 2) family. As to quaternary structure, component of the condensin complex, which contains the cut14/smc2 and cut3/smc2 heterodimer, and three non SMC subunits that probably regulate the complex: cnd1, cnd2 and cnd3.

It localises to the nucleus. It is found in the cytoplasm. The protein resides in the chromosome. Its function is as follows. Regulatory subunit of the condensin complex, a complex required for conversion of interphase chromatin into mitotic-like condense chromosomes. The condensin complex probably introduces positive supercoils into relaxed DNA in the presence of type I topoisomerases and converts nicked DNA into positive knotted forms in the presence of type II topoisomerases. The condensin complex probably also plays a role during interphase in processes such as DNA repair. This Schizosaccharomyces pombe (strain 972 / ATCC 24843) (Fission yeast) protein is Condensin complex subunit 2 (cnd2).